The primary structure comprises 713 residues: Forkhead box protein P2 (713 aa).

A compositionally biased stretch (polar residues) spans 1 to 28 (MMQESATETISNSSMNQNGMSTLSSQLD). Disordered stretches follow at residues 1 to 45 (MMQE…SEVS) and 279 to 337 (DNGI…TGAS). Positions 290–303 (TTNNSSSTTSSTTS) are enriched in low complexity. Residues 313 to 322 (SIVNGQSSVL) show a composition bias toward polar residues. Over residues 324–335 (ARRDSSSHEETG) the composition is skewed to basic and acidic residues. A C2H2-type zinc finger spans residues 344–369 (GVCKWPGCESICEDFGQFLKHLNNEH). The interval 386 to 407 (VQQLEIQLSKERERLQAMMTHL) is leucine-zipper. The interval 420 to 424 (PLNLV) is CTBP1-binding. The segment covering 436–457 (TSPQSLPQTPTTPTAPVTPITQ) has biased composition (low complexity). The interval 436–463 (TSPQSLPQTPTTPTAPVTPITQGPSVIT) is disordered. The segment at residues 502 to 592 (RPPFTYATLI…SQKITGSPTL (91 aa)) is a DNA-binding region (fork-head). Disordered regions lie at residues 647 to 666 (LDHI…QPHI) and 676 to 713 (VIAE…EDLE). Residues 697 to 713 (LEDDREIEEEPLSEDLE) are compositionally biased toward acidic residues.

As to quaternary structure, forms homodimers and heterodimers with FOXP1 and FOXP4. Dimerization is required for DNA-binding. Interacts with CTBP1. Interacts with FOXP1. Interacts with TBR1. Interacts with ZMYM2.

It is found in the nucleus. In terms of biological role, transcriptional repressor that may play a role in the specification and differentiation of lung epithelium. May also play a role in developing neural, gastrointestinal and cardiovascular tissues. Can act with CTBP1 to synergistically repress transcription but CTPBP1 is not essential. Plays a role in synapse formation by regulating SRPX2 levels. This is Forkhead box protein P2 (FOXP2) from Hylobates lar (Lar gibbon).